The chain runs to 88 residues: KAKGKAKRRSSRAGLQFPVGRVHRFLRKGNYANRVGAGAPVYLAAVLEYLAAEILELAGNAARDNKKTRIIPRHLQLAIRNDEELNKL.

The protein belongs to the histone H2A family. In terms of assembly, the nucleosome is a histone octamer containing two molecules each of H2A, H2B, H3 and H4 assembled in one H3-H4 heterotetramer and two H2A-H2B heterodimers. The octamer wraps approximately 147 bp of DNA. Post-translationally, monoubiquitination in C-terminus gives a specific tag for epigenetic transcriptional repression.

The protein localises to the nucleus. It is found in the chromosome. Functionally, core component of nucleosome. Nucleosomes wrap and compact DNA into chromatin, limiting DNA accessibility to the cellular machineries which require DNA as a template. Histones thereby play a central role in transcription regulation, DNA repair, DNA replication and chromosomal stability. DNA accessibility is regulated via a complex set of post-translational modifications of histones, also called histone code, and nucleosome remodeling. This is Histone H2A-beta, sperm from Strongylocentrotus purpuratus (Purple sea urchin).